Consider the following 874-residue polypeptide: Alanine--tRNA ligase (874 aa).

The Zn(2+) site is built by His-563, His-567, Cys-665, and His-669.

This sequence belongs to the class-II aminoacyl-tRNA synthetase family. Zn(2+) is required as a cofactor.

The protein resides in the cytoplasm. It catalyses the reaction tRNA(Ala) + L-alanine + ATP = L-alanyl-tRNA(Ala) + AMP + diphosphate. Catalyzes the attachment of alanine to tRNA(Ala) in a two-step reaction: alanine is first activated by ATP to form Ala-AMP and then transferred to the acceptor end of tRNA(Ala). Also edits incorrectly charged Ser-tRNA(Ala) and Gly-tRNA(Ala) via its editing domain. The chain is Alanine--tRNA ligase from Aeromonas salmonicida (strain A449).